Consider the following 62-residue polypeptide: MDVNASKVDPKLLELLVCPLTKGRLSYDPEANELVSEKARLAYPIRDGVPIMLISEARKIEE.

It belongs to the UPF0434 family.

This Sinorhizobium medicae (strain WSM419) (Ensifer medicae) protein is UPF0434 protein Smed_3047.